The sequence spans 202 residues: GTP cyclohydrolase 1 (202 aa).

Zn(2+) contacts are provided by Cys90, His93, and Cys163.

The protein belongs to the GTP cyclohydrolase I family. In terms of assembly, homomer.

It catalyses the reaction GTP + H2O = 7,8-dihydroneopterin 3'-triphosphate + formate + H(+). It functions in the pathway cofactor biosynthesis; 7,8-dihydroneopterin triphosphate biosynthesis; 7,8-dihydroneopterin triphosphate from GTP: step 1/1. This chain is GTP cyclohydrolase 1, found in Mycobacterium marinum (strain ATCC BAA-535 / M).